Here is a 112-residue protein sequence, read N- to C-terminus: MAAVKQKMHVKKGDMVMVITGKDAGKKGKVLEVFPKKGRVVIEKVNIVKRHTKPSQSMPQGGIFEKEAPIASSNVMLYCTECNKVTRVSVKETEAGKVRVCKKCGVNLPDKK.

It belongs to the universal ribosomal protein uL24 family. As to quaternary structure, part of the 50S ribosomal subunit.

Its function is as follows. One of two assembly initiator proteins, it binds directly to the 5'-end of the 23S rRNA, where it nucleates assembly of the 50S subunit. Functionally, one of the proteins that surrounds the polypeptide exit tunnel on the outside of the subunit. The polypeptide is Large ribosomal subunit protein uL24 (Desulfitobacterium hafniense (strain Y51)).